Consider the following 595-residue polypeptide: Probable Xaa-Pro aminopeptidase CHGG_02942 (595 aa).

A disordered region spans residues 51–76 (KSGPSSSNLSPSTLSTEKTSSDSSGV). Residues 52–66 (SGPSSSNLSPSTLST) are compositionally biased toward low complexity. Residues aspartate 334, aspartate 345, glutamate 541, and glutamate 563 each coordinate Mn(2+).

It belongs to the peptidase M24B family. It depends on Mn(2+) as a cofactor.

The catalysed reaction is Release of any N-terminal amino acid, including proline, that is linked to proline, even from a dipeptide or tripeptide.. Its function is as follows. Catalyzes the removal of a penultimate prolyl residue from the N-termini of peptides. The sequence is that of Probable Xaa-Pro aminopeptidase CHGG_02942 from Chaetomium globosum (strain ATCC 6205 / CBS 148.51 / DSM 1962 / NBRC 6347 / NRRL 1970) (Soil fungus).